The sequence spans 145 residues: Copper transporter 6 (145 aa).

A run of 2 helical transmembrane segments spans residues 47–67 and 99–119; these read LGMYVLCLIVVFLLAVIVEWL and YLVMLAVMSFNGGVFIVAIAG.

It belongs to the copper transporter (Ctr) (TC 1.A.56) family. SLC31A subfamily.

The protein resides in the membrane. Functionally, involved in the transport of copper. The sequence is that of Copper transporter 6 (COPT6) from Arabidopsis thaliana (Mouse-ear cress).